Consider the following 142-residue polypeptide: SLSDKDKAAVKALWTTISKSSDAIGNDALSRMIVVYPQTKTYFSHWPDVTPGSTHIRDHGKKVMGGISLAVSKIDDLKTGLFELSEQHAFKLRVDPANFKILNHCILVVIATMFPKEFTPEAHVSLDKFLSGVALALAERYR.

The residue at position 1 (Ser1) is an N-acetylserine. The Globin domain maps to Ser1–Arg142. Position 59 (His59) interacts with O2. A heme b-binding site is contributed by His88.

It belongs to the globin family. As to quaternary structure, hb1 is a heterotetramer of two alpha chains and two beta-1 chains, while Hb2 is a heterotetramer of two alpha chains and two beta-2 chains. Red blood cells.

Involved in oxygen transport from gills to the various peripheral tissues. This Cygnodraco mawsoni (Antarctic dragonfish) protein is Hemoglobin subunit alpha (hba).